A 425-amino-acid chain; its full sequence is Enolase (425 aa).

Q164 provides a ligand contact to (2R)-2-phosphoglycerate. Catalysis depends on E208, which acts as the Proton donor. D243, E286, and D312 together coordinate Mg(2+). Positions 337, 366, 367, and 388 each coordinate (2R)-2-phosphoglycerate. The Proton acceptor role is filled by K337.

Belongs to the enolase family. Mg(2+) is required as a cofactor.

The protein resides in the cytoplasm. It localises to the secreted. The protein localises to the cell surface. It catalyses the reaction (2R)-2-phosphoglycerate = phosphoenolpyruvate + H2O. It functions in the pathway carbohydrate degradation; glycolysis; pyruvate from D-glyceraldehyde 3-phosphate: step 4/5. Its function is as follows. Catalyzes the reversible conversion of 2-phosphoglycerate (2-PG) into phosphoenolpyruvate (PEP). It is essential for the degradation of carbohydrates via glycolysis. The polypeptide is Enolase (Methanococcus aeolicus (strain ATCC BAA-1280 / DSM 17508 / OCM 812 / Nankai-3)).